A 358-amino-acid chain; its full sequence is Protein RecA (358 aa).

Residue 67–74 (GPESSGKT) coordinates ATP.

It belongs to the RecA family.

The protein localises to the cytoplasm. Its function is as follows. Can catalyze the hydrolysis of ATP in the presence of single-stranded DNA, the ATP-dependent uptake of single-stranded DNA by duplex DNA, and the ATP-dependent hybridization of homologous single-stranded DNAs. It interacts with LexA causing its activation and leading to its autocatalytic cleavage. In Xenorhabdus nematophila (strain ATCC 19061 / DSM 3370 / CCUG 14189 / LMG 1036 / NCIMB 9965 / AN6), this protein is Protein RecA.